The chain runs to 166 residues: Small ribosomal subunit protein uS5 (166 aa).

One can recognise an S5 DRBM domain in the interval 12–75; that stretch reads YIEKLVQVNR…EAARRNMIQV (64 aa).

The protein belongs to the universal ribosomal protein uS5 family. Part of the 30S ribosomal subunit. Contacts proteins S4 and S8.

In terms of biological role, with S4 and S12 plays an important role in translational accuracy. Its function is as follows. Located at the back of the 30S subunit body where it stabilizes the conformation of the head with respect to the body. The polypeptide is Small ribosomal subunit protein uS5 (Pseudomonas fluorescens (strain ATCC BAA-477 / NRRL B-23932 / Pf-5)).